The primary structure comprises 258 residues: Synapse differentiation-inducing gene protein 1 (258 aa).

Topologically, residues 1 to 181 (MDGIVEQKSV…NFLMMPPRDH (181 aa)) are cytoplasmic. S137 carries the phosphoserine modification. The chain crosses the membrane as a helical span at residues 182 to 202 (LGLSVFSMLCCFWPLGIAAFY). Over 203-228 (LSHETNKAVAKGDFHQASTSSRRALF) the chain is Extracellular. The helical intramembrane region spans 229 to 249 (LAVLSITIGTGIYVGVAVALI). Topologically, residues 250–258 (AYLSKNNHL) are extracellular.

The protein belongs to the CD225/Dispanin family. In terms of assembly, homodimer. Interacts with GRIA1 and GRIA2. In terms of tissue distribution, enriched in the cerebellum and also expressed in the neocortex and modestly in the hippocampus (at protein level). Expressed in hippocampal neurons, both in cell body and neurites, however its presence is enriched at excitatory synapses and also found in postsynaptic cells.

The protein resides in the cell membrane. The protein localises to the early endosome membrane. It localises to the postsynaptic density membrane. Its subcellular location is the synapse. It is found in the cell projection. The protein resides in the dendrite. The protein localises to the dendritic spine. Its function is as follows. May regulate AMPA receptor content at nascent synapses, and have a role in postsynaptic development and maturation. The sequence is that of Synapse differentiation-inducing gene protein 1 (Syndig1) from Rattus norvegicus (Rat).